The chain runs to 273 residues: Protein FAM210A (273 aa).

Positions S97–P106 are enriched in low complexity. The tract at residues S97–L116 is disordered. A compositionally biased stretch (basic and acidic residues) spans S107–L116. In terms of domain architecture, DUF1279 spans D118–K230. The helical transmembrane segment at V137–A157 threads the bilayer. Positions K230–K269 form a coiled coil. The segment at K247 to E273 is disordered.

The protein belongs to the FAM210 family. As to quaternary structure, interacts with ATAD3A.

The protein resides in the membrane. The protein localises to the mitochondrion. It is found in the cytoplasm. Functionally, may play a role in the structure and strength of both muscle and bone. In Bos taurus (Bovine), this protein is Protein FAM210A (FAM210A).